A 422-amino-acid polypeptide reads, in one-letter code: Succinate--CoA ligase [ADP-forming] subunit beta, mitochondrial (422 aa).

Residues 1–27 (MVRGSLGKLASRALSVAGKWQHQQLRR) constitute a mitochondrion transit peptide. The ATP-grasp domain occupies 36 to 279 (AELMGKYGIN…TTQEDPREVA (244 aa)). ATP is bound by residues Lys75, 82-84 (GRG), and Glu142. Mg(2+)-binding residues include Asn234 and Asp248. Substrate-binding positions include Asn299 and 356-358 (GIM).

It belongs to the succinate/malate CoA ligase beta subunit family. As to quaternary structure, heterodimer of an alpha and a beta subunit. The cofactor is Mg(2+).

It localises to the mitochondrion. The enzyme catalyses succinate + ATP + CoA = succinyl-CoA + ADP + phosphate. It functions in the pathway carbohydrate metabolism; tricarboxylic acid cycle; succinate from succinyl-CoA (ligase route): step 1/1. Succinyl-CoA synthetase functions in the citric acid cycle (TCA), coupling the hydrolysis of succinyl-CoA to the synthesis of ATP and thus represents the only step of substrate-level phosphorylation in the TCA. The beta subunit provides nucleotide specificity of the enzyme and binds the substrate succinate, while the binding sites for coenzyme A and phosphate are found in the alpha subunit. This is Succinate--CoA ligase [ADP-forming] subunit beta, mitochondrial from Oryza sativa subsp. japonica (Rice).